Reading from the N-terminus, the 178-residue chain is Cytochrome b6-f complex iron-sulfur subunit (178 aa).

The helical transmembrane segment at 20–42 threads the bilayer; it reads LLTFGSVTGVALGALYPVVNYFI. In terms of domain architecture, Rieske spans 65 to 161; it reads ASGWLADHKE…VNVENDNVFV (97 aa). [2Fe-2S] cluster contacts are provided by Cys-107, His-109, Cys-125, and His-128. Cys-112 and Cys-127 form a disulfide bridge.

This sequence belongs to the Rieske iron-sulfur protein family. As to quaternary structure, the 4 large subunits of the cytochrome b6-f complex are cytochrome b6, subunit IV (17 kDa polypeptide, PetD), cytochrome f and the Rieske protein, while the 4 small subunits are PetG, PetL, PetM and PetN. The complex functions as a dimer. [2Fe-2S] cluster is required as a cofactor.

The protein localises to the cellular thylakoid membrane. It carries out the reaction 2 oxidized [plastocyanin] + a plastoquinol + 2 H(+)(in) = 2 reduced [plastocyanin] + a plastoquinone + 4 H(+)(out). Component of the cytochrome b6-f complex, which mediates electron transfer between photosystem II (PSII) and photosystem I (PSI), cyclic electron flow around PSI, and state transitions. The chain is Cytochrome b6-f complex iron-sulfur subunit from Synechococcus sp. (strain RCC307).